A 1193-amino-acid chain; its full sequence is MTGQLVQYGRHRQRRSYARISEVLELPNLIEIQTSSYQWFLDEGLREMFQDISPIEDFTGNLSLEFIDYSLGEPKYPVEESKERDVTYSAPLRVKVRLINKETGEVKDQDVFMGDFPIMTDTGTFIINGAERVIVSQLVRSPSVYFSGKVDKNGKKGFTATVIPNRGAWLEYETDAKDVVYVRIDRTRKLPVTVLLRALGFGSDQEIIDLIGENEYLRNTLDKDNTENTDKALLEIYERLRPGEPPTVENAKSLLDSRFFDPKRYDLASVGRYKINKKLHIKNRLFNQRLAETLVDPETGEILAEKGAILDRRTLDKVLPYLENGIGFKKLYPNGGVVEDEVTLQSIKIYAPTDQEGEQTINVIGNAYIEEGVKNITPSDIIASISYFFNLLHGVGDTDDIDHLGNRRLRSVGELLQNQFRIGLSRMERVVRERMSIQDTNTITPQQLINIRPVIASIKEFFGSSQLSQFMDQTNPLAELTHKRRLSALGPGGLTRERAGMEVRDVHYSHYGRMCPIETPEGPNIGLINSLSSFAKVNRFGFIETPYRRVDPETGKVTPRIDYLTADEEDNYVVAQANARLNDDGSFVDDSIVARFRGENTVVPKDRVDYMDVSPKQVVSAATACIPFLENDDSNRALMGANMQRQAVPLMQPESPIVGTGMEYVSAKDSGAAVICRHPGIVERVEAKNIWVRRYEEVDGQKVKGNLDKYSLLKFVRSNQGTCYNQRPIVSVGDEVEKGEILADGPSMEKGELALGRNVMVGFMTWDGYNYEDAIIMSERLVKDDVYTSIHIEEYESEARDTKLGPEEITRDIPNVGEDALRNLDERGIIRVGAEVKDGDLLVGKVTPKGVTELTAEERLLHAIFGEKAREVRDTSLRVPHGGGGIILDVKVFNREDGDELPPGVNQLVRVYIVQKRKISEGDKMAGRHGNKGVISKILPEEDMPYLPDGTPIDIMLNPLGVPSRMNIGQVLELHLGMAARRLGLHVASPVFDGAREEDVWETLEEAGMSRDAKTVLYDGRTGEPFDNRVSVGIMYMIKLAHMVDDKLHARSTGPYSLVTQQPLGGKAQFGGQRFGEMEVWALEAYGAAYTLQEILTVKSDDVVGRVKTYEAIVKGDNVPEPGVPESFKVLIKELQSLGMDVKILSSDEEEIEMRDLEDDEDAKQNEGLSLPNDEESEELVSADAERDVVTKE.

A compositionally biased stretch (acidic residues) spans 1153–1162 (EMRDLEDDED). The disordered stretch occupies residues 1153-1193 (EMRDLEDDEDAKQNEGLSLPNDEESEELVSADAERDVVTKE). A compositionally biased stretch (basic and acidic residues) spans 1184 to 1193 (DAERDVVTKE).

This sequence belongs to the RNA polymerase beta chain family. In terms of assembly, the RNAP catalytic core consists of 2 alpha, 1 beta, 1 beta' and 1 omega subunit. When a sigma factor is associated with the core the holoenzyme is formed, which can initiate transcription.

The catalysed reaction is RNA(n) + a ribonucleoside 5'-triphosphate = RNA(n+1) + diphosphate. Its function is as follows. DNA-dependent RNA polymerase catalyzes the transcription of DNA into RNA using the four ribonucleoside triphosphates as substrates. In Bacillus licheniformis (strain ATCC 14580 / DSM 13 / JCM 2505 / CCUG 7422 / NBRC 12200 / NCIMB 9375 / NCTC 10341 / NRRL NRS-1264 / Gibson 46), this protein is DNA-directed RNA polymerase subunit beta.